The sequence spans 36 residues: U1-ectatotoxin-Et1b subunit B (36 aa).

The cysteines at positions 11 and 33 are disulfide-linked.

Belongs to the ectatomin family. Ectatomin-Et subfamily. In terms of assembly, heterodimer of subunits A and B; disulfide-linked. As to expression, expressed by the venom gland.

It localises to the secreted. It is found in the target cell membrane. In Ectatomma tuberculatum (Selva ant), this protein is U1-ectatotoxin-Et1b subunit B.